A 357-amino-acid chain; its full sequence is tRNA/tmRNA (uracil-C(5))-methyltransferase (357 aa).

Residues glutamine 180, tyrosine 209, asparagine 214, glutamate 230, and aspartate 290 each contribute to the S-adenosyl-L-methionine site. Cysteine 315 (nucleophile) is an active-site residue. Catalysis depends on glutamate 349, which acts as the Proton acceptor.

It belongs to the class I-like SAM-binding methyltransferase superfamily. RNA M5U methyltransferase family. TrmA subfamily.

It carries out the reaction uridine(54) in tRNA + S-adenosyl-L-methionine = 5-methyluridine(54) in tRNA + S-adenosyl-L-homocysteine + H(+). It catalyses the reaction uridine(341) in tmRNA + S-adenosyl-L-methionine = 5-methyluridine(341) in tmRNA + S-adenosyl-L-homocysteine + H(+). Its function is as follows. Dual-specificity methyltransferase that catalyzes the formation of 5-methyluridine at position 54 (m5U54) in all tRNAs, and that of position 341 (m5U341) in tmRNA (transfer-mRNA). The chain is tRNA/tmRNA (uracil-C(5))-methyltransferase from Campylobacter jejuni subsp. jejuni serotype O:2 (strain ATCC 700819 / NCTC 11168).